We begin with the raw amino-acid sequence, 240 residues long: Endonuclease NucS 1 (240 aa).

Belongs to the NucS endonuclease family.

Its subcellular location is the cytoplasm. Functionally, cleaves both 3' and 5' ssDNA extremities of branched DNA structures. In Halobacterium salinarum (strain ATCC 700922 / JCM 11081 / NRC-1) (Halobacterium halobium), this protein is Endonuclease NucS 1.